We begin with the raw amino-acid sequence, 85 residues long: Phosphocarrier protein HPr (85 aa).

An HPr domain is found at 1 to 85; it reads MFQQEVTITA…HLVKLMAELE (85 aa). His15 functions as the Pros-phosphohistidine intermediate in the catalytic mechanism.

This sequence belongs to the HPr family.

The protein resides in the cytoplasm. General (non sugar-specific) component of the phosphoenolpyruvate-dependent sugar phosphotransferase system (sugar PTS). This major carbohydrate active-transport system catalyzes the phosphorylation of incoming sugar substrates concomitantly with their translocation across the cell membrane. The phosphoryl group from phosphoenolpyruvate (PEP) is transferred to the phosphoryl carrier protein HPr by enzyme I. Phospho-HPr then transfers it to the PTS EIIA domain. The polypeptide is Phosphocarrier protein HPr (ptsH) (Escherichia coli O157:H7).